We begin with the raw amino-acid sequence, 624 residues long: Glutamine--fructose-6-phosphate aminotransferase [isomerizing] (624 aa).

Cys-2 functions as the Nucleophile; for GATase activity in the catalytic mechanism. The Glutamine amidotransferase type-2 domain occupies Cys-2–Asp-226. 2 consecutive SIS domains span residues Ser-297 to Thr-436 and Leu-469 to Pro-614. Lys-619 functions as the For Fru-6P isomerization activity in the catalytic mechanism.

As to quaternary structure, homodimer.

It is found in the cytoplasm. The catalysed reaction is D-fructose 6-phosphate + L-glutamine = D-glucosamine 6-phosphate + L-glutamate. Functionally, catalyzes the first step in hexosamine metabolism, converting fructose-6P into glucosamine-6P using glutamine as a nitrogen source. This chain is Glutamine--fructose-6-phosphate aminotransferase [isomerizing], found in Mycolicibacterium paratuberculosis (strain ATCC BAA-968 / K-10) (Mycobacterium paratuberculosis).